A 287-amino-acid chain; its full sequence is ATP synthase gamma chain (287 aa).

It belongs to the ATPase gamma chain family. As to quaternary structure, F-type ATPases have 2 components, CF(1) - the catalytic core - and CF(0) - the membrane proton channel. CF(1) has five subunits: alpha(3), beta(3), gamma(1), delta(1), epsilon(1). CF(0) has three main subunits: a, b and c.

It is found in the cell inner membrane. In terms of biological role, produces ATP from ADP in the presence of a proton gradient across the membrane. The gamma chain is believed to be important in regulating ATPase activity and the flow of protons through the CF(0) complex. The chain is ATP synthase gamma chain from Shigella sonnei (strain Ss046).